A 427-amino-acid polypeptide reads, in one-letter code: Glutamate-1-semialdehyde 2,1-aminomutase (427 aa).

Residue lysine 265 is modified to N6-(pyridoxal phosphate)lysine.

It belongs to the class-III pyridoxal-phosphate-dependent aminotransferase family. HemL subfamily. As to quaternary structure, homodimer. Pyridoxal 5'-phosphate serves as cofactor.

It is found in the cytoplasm. The enzyme catalyses (S)-4-amino-5-oxopentanoate = 5-aminolevulinate. The protein operates within porphyrin-containing compound metabolism; protoporphyrin-IX biosynthesis; 5-aminolevulinate from L-glutamyl-tRNA(Glu): step 2/2. This is Glutamate-1-semialdehyde 2,1-aminomutase from Shewanella amazonensis (strain ATCC BAA-1098 / SB2B).